Here is a 78-residue protein sequence, read N- to C-terminus: Large ribosomal subunit protein bL31 (78 aa).

Residues Cys16, Cys18, Cys38, and Cys41 each contribute to the Zn(2+) site.

Belongs to the bacterial ribosomal protein bL31 family. Type A subfamily. Part of the 50S ribosomal subunit. The cofactor is Zn(2+).

Its function is as follows. Binds the 23S rRNA. The chain is Large ribosomal subunit protein bL31 from Parafrankia sp. (strain EAN1pec).